The primary structure comprises 247 residues: Chaperone protein AfaB (247 aa).

The signal sequence occupies residues 1–29 (MKMRAVAVFTGMLTGVLSVAGLLSAGAYA).

The protein belongs to the periplasmic pilus chaperone family.

It localises to the periplasm. Functionally, involved in the biogenesis of the AFA-III afimbrial adhesin. This chain is Chaperone protein AfaB (afaB), found in Escherichia coli.